A 27-amino-acid polypeptide reads, in one-letter code: Palustrin-1d (27 aa).

A disulfide bond links cysteine 21 and cysteine 27.

In terms of tissue distribution, expressed by the skin glands.

The protein localises to the secreted. Functionally, antimicrobial activity against Gram-negative bacterium E.coli. This chain is Palustrin-1d, found in Lithobates palustris (Pickerel frog).